A 57-amino-acid chain; its full sequence is MAVPKRRTSKTRKNKRRTHFKISVPGMTECPNCGEYKLSHRVCKNCGSYNGEEVVSK.

The protein belongs to the bacterial ribosomal protein bL32 family.

This Staphylococcus epidermidis (strain ATCC 35984 / DSM 28319 / BCRC 17069 / CCUG 31568 / BM 3577 / RP62A) protein is Large ribosomal subunit protein bL32.